The primary structure comprises 142 residues: Cystatin-8 (142 aa).

A signal peptide spans 1–19; it reads MAKPLWLSLILFIIPVALA. Asparagine 39 is a glycosylation site (N-linked (GlcNAc...) asparagine). Positions 77–81 match the Secondary area of contact motif; it reads QITDR. Intrachain disulfides connect cysteine 95/cysteine 105 and cysteine 119/cysteine 139. A glycan (N-linked (GlcNAc...) asparagine) is linked at asparagine 100.

The protein belongs to the cystatin family. As to expression, proximal caput region of the epididymis. Lower expression in the testis. Within the testis it is localized to the elongating spermatids, whereas within the epididymis it is exclusively synthesized by the proximal caput epithelium.

The protein localises to the secreted. Functionally, performs a specialized role during sperm development and maturation. In Mus musculus (Mouse), this protein is Cystatin-8 (Cst8).